Consider the following 430-residue polypeptide: MKVALPKGVFDIFPYITDAKHMWRHTSLWHRVEDVIHEVCDLYGFSEVRTPVFEKSEVFLHAGEQSDIVKKEMYTFLDKKGRSLTLRPEGTAPIVRSFIDNSMNQRDDNKFYYILPMFRYERQQSGRYRQHHQFGLEAIGVRHPLRDAEVLSLLWNFYSAVGLQGMQIQLNFLGGGTTRQRYDKVLREYFLEHFESLSSLSKERFNTNLLRILDSKETEDQEIIKSAPSILEYISDEDQKYFDEILTALNSLDIPHSINPKLVRGLDYYTDVVFEAITTFGGHSYALGGGGRYDGLVAASGGPSTPACGFGVGLERVMQTLLAQGNITLPSSHKLRLIPVESQADSFCFIWAQHLRGLGIPTEIDWTHKKLKNALKTADAEKATFVCLVGERELLSEQLTIKDMSSRQEFSGSKQEVEQRLLYEIQNTSL.

This sequence belongs to the class-II aminoacyl-tRNA synthetase family. Homodimer.

The protein localises to the cytoplasm. The enzyme catalyses tRNA(His) + L-histidine + ATP = L-histidyl-tRNA(His) + AMP + diphosphate + H(+). The sequence is that of Histidine--tRNA ligase from Chlamydia felis (strain Fe/C-56) (Chlamydophila felis).